The following is a 71-amino-acid chain: Translation initiation factor IF-1 (71 aa).

The S1-like domain occupies 1-71; it reads MSKDDLIQFT…LTKGRVIHRH (71 aa).

It belongs to the IF-1 family. As to quaternary structure, component of the 30S ribosomal translation pre-initiation complex which assembles on the 30S ribosome in the order IF-2 and IF-3, IF-1 and N-formylmethionyl-tRNA(fMet); mRNA recruitment can occur at any time during PIC assembly.

It localises to the cytoplasm. Functionally, one of the essential components for the initiation of protein synthesis. Stabilizes the binding of IF-2 and IF-3 on the 30S subunit to which N-formylmethionyl-tRNA(fMet) subsequently binds. Helps modulate mRNA selection, yielding the 30S pre-initiation complex (PIC). Upon addition of the 50S ribosomal subunit IF-1, IF-2 and IF-3 are released leaving the mature 70S translation initiation complex. This is Translation initiation factor IF-1 from Rickettsia akari (strain Hartford).